The sequence spans 450 residues: MTINYHKEIMTSHPWTFFLLLFKWKGSIWKAVYMETIIFLICYGIISVIYKTAMGESSQRTFESLVRYFDKRLSYIPLEFVLGFFVTTVVNRWTKLYQTIGFIDNVGLMANCYIRGATEKARIYRRNIMRYCELVQILVFRDMSMRTRRRFPTMETVVAAGFMNKHELELYNSYDTKYNSKLGTKYWIPANWALCMTYKARKDGYIESDYFKAQMEGEIRTWRTNIEWVCNYDWVPLPLMYPQLVCLAVNLYFLVSIIARQLVIEKHKMVDEVDVYFPVMTFLQFIFYMGWLKVIDVMLNPFGEDDDDFETNALIDRNITMGLMIADNPMSTPELRKDPFYDEVDVPLLYSEESSNIPNHHYHGSVSEVRLEQKGNAPVMMMPHSQSAANLRRMMSFKSVDEDEKDINAFSMSHDDARMRNWREVSLDSSFLADLNENKEWKIPTNPQKF.

The Cytoplasmic segment spans residues 1–31 (MTINYHKEIMTSHPWTFFLLLFKWKGSIWKA). A helical transmembrane segment spans residues 32 to 51 (VYMETIIFLICYGIISVIYK). Over 52-60 (TAMGESSQR) the chain is Extracellular. The helical transmembrane segment at 61–82 (TFESLVRYFDKRLSYIPLEFVL) threads the bilayer. Over 83-242 (GFFVTTVVNR…DWVPLPLMYP (160 aa)) the chain is Cytoplasmic. A helical transmembrane segment spans residues 243 to 260 (QLVCLAVNLYFLVSIIAR). At 261–278 (QLVIEKHKMVDEVDVYFP) the chain is on the extracellular side. A helical transmembrane segment spans residues 279–292 (VMTFLQFIFYMGWL). Residues 293-450 (KVIDVMLNPF…WKIPTNPQKF (158 aa)) are Cytoplasmic-facing. Ca(2+) is bound by residues Asn300, Asp305, and Asp308.

Belongs to the anion channel-forming bestrophin (TC 1.A.46) family. Calcium-sensitive chloride channel subfamily. Forms oligomers.

It localises to the cell membrane. It catalyses the reaction chloride(in) = chloride(out). In terms of biological role, ligand-gated anion channel that allows the movement of chloride monoatomic anions across cell membranes when activated by Calcium (Ca2+). The protein is Bestrophin homolog 1 (best-1) of Caenorhabditis elegans.